The primary structure comprises 205 residues: uncharacterized protein (205 aa).

3 helical membrane-spanning segments follow: residues 45 to 65 (LFFYFFANFFTNSFIVQFLVI), 119 to 139 (VFWLGLVVGPAAWIFFVVTAF), and 144 to 164 (FEWMIVALLGALMNMANLWGY).

Belongs to the TVP23 family.

It localises to the membrane. This is an uncharacterized protein from Caenorhabditis elegans.